A 734-amino-acid chain; its full sequence is Origin of replication complex subunit 3 (734 aa).

2 disordered regions span residues 1 to 25 (MAPSGTVADPPQCSTTDSFNSSDTA) and 532 to 554 (GQRQGLPNSPKKHASRSNSKLEK). A compositionally biased stretch (polar residues) spans 12–24 (QCSTTDSFNSSDT).

It belongs to the ORC3 family. Component of the origin recognition complex (ORC) composed of at least ORC1 (ORC1A or ORC1B), ORC2, ORC3, ORC4, ORC5 and ORC6. ORC is regulated in a cell-cycle and development dependent manner. It is sequentially assembled at the exit from anaphase of mitosis and disassembled as cells enter S phase. Interacts directly with ORC1A, ORC2, ORC4, ORC5 and ORC6. Follow a cell-cycle regulation with a peak at the G1/S-phase. Mostly expressed in siliques and flowers, and, to a lower exent, in flower buds, leaves, roots and stems.

It is found in the nucleus. Its function is as follows. Component of the origin recognition complex (ORC) that binds origins of replication. DNA-binding is ATP-dependent. The specific DNA sequences that define origins of replication have not been identified yet. This is Origin of replication complex subunit 3 from Arabidopsis thaliana (Mouse-ear cress).